We begin with the raw amino-acid sequence, 315 residues long: Methionyl-tRNA formyltransferase (315 aa).

An N-terminal domain region spans residues 2–189 (SDSLRIIFAG…LITTLKQLAD (188 aa)). 113–116 (SLLP) serves as a coordination point for (6S)-5,6,7,8-tetrahydrofolate. Positions 210 to 315 (KEEARIDWSL…EWFIPGNRLA (106 aa)) are C-terminal domain.

The protein belongs to the Fmt family.

It carries out the reaction L-methionyl-tRNA(fMet) + (6R)-10-formyltetrahydrofolate = N-formyl-L-methionyl-tRNA(fMet) + (6S)-5,6,7,8-tetrahydrofolate + H(+). In terms of biological role, attaches a formyl group to the free amino group of methionyl-tRNA(fMet). The formyl group appears to play a dual role in the initiator identity of N-formylmethionyl-tRNA by promoting its recognition by IF2 and preventing the misappropriation of this tRNA by the elongation apparatus. This is Methionyl-tRNA formyltransferase from Salmonella typhi.